The following is a 388-amino-acid chain: Protein FAM199X (388 aa).

Residues 288–312 (SMVSSASSSGSSVGNSASNSSANMS) are compositionally biased toward low complexity. The disordered stretch occupies residues 288–358 (SMVSSASSSG…QLKEQRQARK (71 aa)). Serine 316 and serine 321 each carry phosphoserine. The span at 330-349 (DSKKRSKQRKLQQKAFRKRQ) shows a compositional bias: basic residues.

The protein belongs to the FAM199 family.

The protein is Protein FAM199X (Fam199x) of Mus musculus (Mouse).